The sequence spans 609 residues: Phosphoenolpyruvate carboxykinase [GTP] (609 aa).

Substrate contacts are provided by residues R81 and 220 to 222 (YGG). Mn(2+)-binding residues include K229 and H249. S271 lines the substrate pocket. A GTP-binding site is contributed by 272–277 (ACGKTN). The active site involves C273. D296 lines the Mn(2+) pocket. Residue 387 to 389 (NSR) coordinates substrate. GTP-binding positions include R389, R420, and 515–518 (FGEN).

This sequence belongs to the phosphoenolpyruvate carboxykinase [GTP] family. As to quaternary structure, monomer. Mn(2+) is required as a cofactor.

The protein resides in the cytoplasm. It catalyses the reaction oxaloacetate + GTP = phosphoenolpyruvate + GDP + CO2. It functions in the pathway carbohydrate biosynthesis; gluconeogenesis. Catalyzes the conversion of oxaloacetate (OAA) to phosphoenolpyruvate (PEP), the rate-limiting step in the metabolic pathway that produces glucose from lactate and other precursors derived from the citric acid cycle. This is Phosphoenolpyruvate carboxykinase [GTP] from Mycolicibacterium paratuberculosis (strain ATCC BAA-968 / K-10) (Mycobacterium paratuberculosis).